Here is a 143-residue protein sequence, read N- to C-terminus: Small ribosomal subunit protein uS12 (143 aa).

A compositionally biased stretch (basic residues) spans 1–20; sequence MGKCRGLRTARKLRSHRRDQ. A disordered region spans residues 1 to 26; sequence MGKCRGLRTARKLRSHRRDQKWHDKQ. Lysine 37 is covalently cross-linked (Glycyl lysine isopeptide (Lys-Gly) (interchain with G-Cter in SUMO2)). Lysine 54 is modified (N6-succinyllysine). Proline 62 carries the post-translational modification 3-hydroxyproline. The residue at position 135 (lysine 135) is an N6-acetyllysine.

This sequence belongs to the universal ribosomal protein uS12 family. As to quaternary structure, component of the 40S small ribosomal subunit. Part of the small subunit (SSU) processome, composed of more than 70 proteins and the RNA chaperone small nucleolar RNA (snoRNA) U3. Hydroxylation at Pro-62 affects translation termination efficiency.

It is found in the cytoplasm. The protein localises to the cytosol. The protein resides in the rough endoplasmic reticulum. It localises to the nucleus. Its subcellular location is the nucleolus. Functionally, component of the ribosome, a large ribonucleoprotein complex responsible for the synthesis of proteins in the cell. The small ribosomal subunit (SSU) binds messenger RNAs (mRNAs) and translates the encoded message by selecting cognate aminoacyl-transfer RNA (tRNA) molecules. The large subunit (LSU) contains the ribosomal catalytic site termed the peptidyl transferase center (PTC), which catalyzes the formation of peptide bonds, thereby polymerizing the amino acids delivered by tRNAs into a polypeptide chain. The nascent polypeptides leave the ribosome through a tunnel in the LSU and interact with protein factors that function in enzymatic processing, targeting, and the membrane insertion of nascent chains at the exit of the ribosomal tunnel. Plays an important role in translational accuracy. Part of the small subunit (SSU) processome, first precursor of the small eukaryotic ribosomal subunit. During the assembly of the SSU processome in the nucleolus, many ribosome biogenesis factors, an RNA chaperone and ribosomal proteins associate with the nascent pre-rRNA and work in concert to generate RNA folding, modifications, rearrangements and cleavage as well as targeted degradation of pre-ribosomal RNA by the RNA exosome. The chain is Small ribosomal subunit protein uS12 (RPS23) from Bos taurus (Bovine).